A 213-amino-acid polypeptide reads, in one-letter code: Putative thiamine-phosphate synthase (213 aa).

Residues 38–42 and Asn70 each bind 4-amino-2-methyl-5-(diphosphooxymethyl)pyrimidine; that span reads QLREK. Asp71 is a Mg(2+) binding site. Ser109 is a binding site for 4-amino-2-methyl-5-(diphosphooxymethyl)pyrimidine. 135 to 137 is a 2-[(2R,5Z)-2-carboxy-4-methylthiazol-5(2H)-ylidene]ethyl phosphate binding site; it reads TPS. Lys138 contacts 4-amino-2-methyl-5-(diphosphooxymethyl)pyrimidine. Residues Gly166 and 186-187 contribute to the 2-[(2R,5Z)-2-carboxy-4-methylthiazol-5(2H)-ylidene]ethyl phosphate site; that span reads IS.

The protein belongs to the thiamine-phosphate synthase family. It depends on Mg(2+) as a cofactor.

It catalyses the reaction 2-[(2R,5Z)-2-carboxy-4-methylthiazol-5(2H)-ylidene]ethyl phosphate + 4-amino-2-methyl-5-(diphosphooxymethyl)pyrimidine + 2 H(+) = thiamine phosphate + CO2 + diphosphate. It carries out the reaction 2-(2-carboxy-4-methylthiazol-5-yl)ethyl phosphate + 4-amino-2-methyl-5-(diphosphooxymethyl)pyrimidine + 2 H(+) = thiamine phosphate + CO2 + diphosphate. The catalysed reaction is 4-methyl-5-(2-phosphooxyethyl)-thiazole + 4-amino-2-methyl-5-(diphosphooxymethyl)pyrimidine + H(+) = thiamine phosphate + diphosphate. Its pathway is cofactor biosynthesis; thiamine diphosphate biosynthesis; thiamine phosphate from 4-amino-2-methyl-5-diphosphomethylpyrimidine and 4-methyl-5-(2-phosphoethyl)-thiazole: step 1/1. Condenses 4-methyl-5-(beta-hydroxyethyl)thiazole monophosphate (THZ-P) and 2-methyl-4-amino-5-hydroxymethyl pyrimidine pyrophosphate (HMP-PP) to form thiamine monophosphate (TMP). This chain is Putative thiamine-phosphate synthase (thiE), found in Geobacter sulfurreducens (strain ATCC 51573 / DSM 12127 / PCA).